We begin with the raw amino-acid sequence, 723 residues long: Polyribonucleotide nucleotidyltransferase (723 aa).

2 residues coordinate Mg(2+): Asp-488 and Asp-494. A KH domain is found at 555-614 (PRMITMKIHPDKIREVIGKGGSTIQALTKETGTTIDIQEDGTITIASTSTDGMAEAKRRI). An S1 motif domain is found at 624–692 (GKIYAGTVLK…EKGRLRLSLK (69 aa)). The tract at residues 701–723 (SISPINAGEAAAPAAPAEGSEQQ) is disordered. Positions 707-723 (AGEAAAPAAPAEGSEQQ) are enriched in low complexity.

The protein belongs to the polyribonucleotide nucleotidyltransferase family. Requires Mg(2+) as cofactor.

It is found in the cytoplasm. The catalysed reaction is RNA(n+1) + phosphate = RNA(n) + a ribonucleoside 5'-diphosphate. Its function is as follows. Involved in mRNA degradation. Catalyzes the phosphorolysis of single-stranded polyribonucleotides processively in the 3'- to 5'-direction. The chain is Polyribonucleotide nucleotidyltransferase from Cupriavidus necator (strain ATCC 17699 / DSM 428 / KCTC 22496 / NCIMB 10442 / H16 / Stanier 337) (Ralstonia eutropha).